A 295-amino-acid polypeptide reads, in one-letter code: Acetylglutamate kinase (295 aa).

Substrate-binding positions include 64–65 (GG), arginine 86, and asparagine 179.

This sequence belongs to the acetylglutamate kinase family. ArgB subfamily.

It is found in the cytoplasm. It carries out the reaction N-acetyl-L-glutamate + ATP = N-acetyl-L-glutamyl 5-phosphate + ADP. Its pathway is amino-acid biosynthesis; L-arginine biosynthesis; N(2)-acetyl-L-ornithine from L-glutamate: step 2/4. Catalyzes the ATP-dependent phosphorylation of N-acetyl-L-glutamate. This chain is Acetylglutamate kinase, found in Thermosynechococcus vestitus (strain NIES-2133 / IAM M-273 / BP-1).